Reading from the N-terminus, the 151-residue chain is Large ribosomal subunit protein uL22 (151 aa).

It belongs to the universal ribosomal protein uL22 family. In terms of assembly, part of the 50S ribosomal subunit.

In terms of biological role, this protein binds specifically to 23S rRNA. It makes multiple contacts with different domains of the 23S rRNA in the assembled 50S subunit and ribosome. Its function is as follows. The globular domain of the protein is located near the polypeptide exit tunnel on the outside of the subunit, while an extended beta-hairpin is found that lines the wall of the exit tunnel in the center of the 70S ribosome. The chain is Large ribosomal subunit protein uL22 from Methanococcoides burtonii (strain DSM 6242 / NBRC 107633 / OCM 468 / ACE-M).